The following is a 530-amino-acid chain: Hyalin (530 aa).

7 consecutive HYR domains span residues 1–66, 67–150, 151–234, 235–319, 320–403, 404–486, and 487–530; these read NVEI…TVTA, TDSI…NVVE, VDTT…NVVE, VDTT…NIVE, EDTT…TVNT, and VDTT…ASLV.

As to quaternary structure, homooligomer in presence of calcium. Glycosylated.

It localises to the secreted. The protein resides in the extracellular space. Its subcellular location is the extracellular matrix. Its function is as follows. Major constituent of the hyaline layer. The hyaline layer of echinoderm embryos is an extraembryonic matrix that functions as a substrate for cell adhesion through early development. This chain is Hyalin, found in Lytechinus variegatus (Green sea urchin).